Consider the following 234-residue polypeptide: STARD3 N-terminal-like protein (234 aa).

Residue methionine 1 is modified to N-acetylmethionine. Residues 1-53 (MNHLPEDMENALTGSQSSHASLRNIHSINPTQLMARIESYEGREKKGISDVRR) are Cytoplasmic-facing. 3 positions are modified to phosphoserine: serine 15, serine 21, and serine 27. The region spanning 48 to 218 (ISDVRRTFCL…YSPPESEAGS (171 aa)) is the MENTAL domain. The chain crosses the membrane as a helical span at residues 54–74 (TFCLFVTFDLLFVTLLWIIEL). Over 75–97 (NVNGGIENTLEKEVMQYDYYSSY) the chain is Extracellular. Residues 98–118 (FDIFLLAVFRFKVLILAYAVC) form a helical membrane-spanning segment. Residues 119 to 122 (RLRH) are Cytoplasmic-facing. The helical transmembrane segment at 123–143 (WWAIALTTAVTSAFLLAKVIL) threads the bilayer. The Extracellular portion of the chain corresponds to 144 to 150 (SKLFSQG). Residues 151 to 171 (AFGYVLPIISFILAWIETWFL) form a helical membrane-spanning segment. Residues 172 to 234 (DFKVLPQEAE…QDSEKPLLEL (63 aa)) lie on the Cytoplasmic side of the membrane. Phosphoserine is present on serine 193. The interval 200–234 (PGGLSDGQFYSPPESEAGSEEAEEKQDSEKPLLEL) is disordered. An FFAT motif is present at residues 208-213 (FYSPPE). Residues 224-234 (KQDSEKPLLEL) show a composition bias toward basic and acidic residues.

The protein belongs to the STARD3 family. As to quaternary structure, homodimer. Interacts (via the MENTAL domain) with STARD3NL. Interacts (via FFAT motif) with VAPA. Interacts (via FFAT motif) with VAPB. Interacts (via FFAT motif) with MOSPD2 (via MSP domain).

Its subcellular location is the late endosome membrane. In terms of biological role, tethering protein that creates contact site between the endoplasmic reticulum and late endosomes: localizes to late endosome membranes and contacts the endoplasmic reticulum via interaction with VAPA and VAPB. The sequence is that of STARD3 N-terminal-like protein from Homo sapiens (Human).